The chain runs to 249 residues: Small ribosomal subunit protein uS4m (249 aa).

In terms of domain architecture, S4 RNA-binding spans 133-193 (RRLDIIIYRA…PEIVNLLRNQ (61 aa)).

Belongs to the universal ribosomal protein uS4 family.

It localises to the mitochondrion. The protein is Small ribosomal subunit protein uS4m (RPS4) of Reclinomonas americana.